The primary structure comprises 226 residues: MLYNFIHNIHKEGYIFIMISFLASCIGFAISCSLGIICLVISLLCIYFFRDPIRMVPEGDDLITSPADGLILDIKEVNSPIDDSTQVVCISIFLNVLNVHVNRIPVSGTIKATEYIPGRFISASLNKSSELNERQRLIIESKIDNRSIIVDQIAGLIARRIVCNVSEGQQVNSGERFGIIRFGSRVNLYLPLNTHISVFKGQTVIGGETILAYLQDAPKQLTVKSI.

S184 (schiff-base intermediate with substrate; via pyruvic acid) is an active-site residue. S184 carries the pyruvic acid (Ser); by autocatalysis modification.

It belongs to the phosphatidylserine decarboxylase family. PSD-A subfamily. As to quaternary structure, heterodimer of a large membrane-associated beta subunit and a small pyruvoyl-containing alpha subunit. Pyruvate serves as cofactor. Is synthesized initially as an inactive proenzyme. Formation of the active enzyme involves a self-maturation process in which the active site pyruvoyl group is generated from an internal serine residue via an autocatalytic post-translational modification. Two non-identical subunits are generated from the proenzyme in this reaction, and the pyruvate is formed at the N-terminus of the alpha chain, which is derived from the carboxyl end of the proenzyme. The post-translation cleavage follows an unusual pathway, termed non-hydrolytic serinolysis, in which the side chain hydroxyl group of the serine supplies its oxygen atom to form the C-terminus of the beta chain, while the remainder of the serine residue undergoes an oxidative deamination to produce ammonia and the pyruvoyl prosthetic group on the alpha chain.

The protein resides in the cell membrane. The enzyme catalyses a 1,2-diacyl-sn-glycero-3-phospho-L-serine + H(+) = a 1,2-diacyl-sn-glycero-3-phosphoethanolamine + CO2. It functions in the pathway phospholipid metabolism; phosphatidylethanolamine biosynthesis; phosphatidylethanolamine from CDP-diacylglycerol: step 2/2. Functionally, catalyzes the formation of phosphatidylethanolamine (PtdEtn) from phosphatidylserine (PtdSer). In Ehrlichia chaffeensis (strain ATCC CRL-10679 / Arkansas), this protein is Phosphatidylserine decarboxylase proenzyme.